The chain runs to 208 residues: Thymidylate kinase (208 aa).

10-17 (GLEGAGKT) is an ATP binding site.

This sequence belongs to the thymidylate kinase family.

It catalyses the reaction dTMP + ATP = dTDP + ADP. Functionally, phosphorylation of dTMP to form dTDP in both de novo and salvage pathways of dTTP synthesis. The sequence is that of Thymidylate kinase from Actinobacillus pleuropneumoniae serotype 5b (strain L20).